A 143-amino-acid polypeptide reads, in one-letter code: Transcriptional regulator MraZ (143 aa).

2 SpoVT-AbrB domains span residues 5-47 (EYKH…PMHE) and 76-119 (ATEC…SSKR).

It belongs to the MraZ family. In terms of assembly, forms oligomers.

Its subcellular location is the cytoplasm. It localises to the nucleoid. The sequence is that of Transcriptional regulator MraZ from Halothermothrix orenii (strain H 168 / OCM 544 / DSM 9562).